A 222-amino-acid polypeptide reads, in one-letter code: Eukaryotic translation initiation factor 3 subunit K (222 aa).

Residues 46–208 (YDLEANLAVL…KIKTKNITEK (163 aa)) enclose the PCI domain.

Belongs to the eIF-3 subunit K family. In terms of assembly, component of the eukaryotic translation initiation factor 3 (eIF-3) complex. The eIF-3 complex interacts with pix.

The protein resides in the cytoplasm. In terms of biological role, component of the eukaryotic translation initiation factor 3 (eIF-3) complex, which is involved in protein synthesis of a specialized repertoire of mRNAs and, together with other initiation factors, stimulates binding of mRNA and methionyl-tRNAi to the 40S ribosome. The eIF-3 complex specifically targets and initiates translation of a subset of mRNAs involved in cell proliferation. The polypeptide is Eukaryotic translation initiation factor 3 subunit K (Drosophila persimilis (Fruit fly)).